The sequence spans 602 residues: MPYKLKKEKEPPKVAKCTAKPSSSGKDGGGENTEEAQPQPQPQPQPQAQSQPPSSNKRPSNSTPPPTQLSKIKYSGGPQIVKKERRQSSSRFNLSKNRELQKLPALKDSPTQEREELFIQKLRQCCVLFDFVSDPLSDLKFKEVKRAGLNEMVEYITHSRDVVTEAIYPEAVTMFSVNLFRTLPPSSNPTGAEFDPEEDEPTLEAAWPHLQLVYEFFLRFLESPDFQPNIAKKYIDQKFVLALLDLFDSEDPRERDFLKTILHRIYGKFLGLRAYIRRQINHIFYRFIYETEHHNGIAELLEILGSIINGFALPLKEEHKMFLIRVLLPLHKVKSLSVYHPQLAYCVVQFLEKESSLTEPVIVGLLKFWPKTHSPKEVMFLNELEEILDVIEPSEFSKVMEPLFRQLAKCVSSPHFQVAERALYYWNNEYIMSLISDNAARVLPIMFPALYRNSKSHWNKTIHGLIYNALKLFMEMNQKLFDDCTQQYKAEKQKGRFRMKEREEMWQKIEELARLNPQYPMFRAPPPLPPVYSMETETPTAEDIQLLKRTVETEAVQMLKDIKKEKVLLRRKSELPQDVYTIKALEAHKRAEEFLTASQEAL.

Residues 1-13 (MPYKLKKEKEPPK) are compositionally biased toward basic and acidic residues. Residues 1–96 (MPYKLKKEKE…QSSSRFNLSK (96 aa)) are disordered. Repeat copies occupy residues 37–38 (QP), 39–40 (QP), 41–42 (QP), 43–44 (QP), and 45–46 (QP). Residues 37 to 52 (QPQPQPQPQPQAQSQP) form an 8 X 2 AA approximate tandem repeats of Q-P region. Residues 46 to 55 (PQAQSQPPSS) show a composition bias toward low complexity. Residues 47-48 (QA) form a 6; approximate repeat. A 7; approximate repeat occupies 49–50 (QS). The stretch at 51–52 (QP) is repeat 8. Thr63 is modified (phosphothreonine). A phosphoserine mark is found at Ser88, Ser89, and Ser90. Positions 523-530 (RAPPPLPP) match the SH3-binding; class I motif. Residues 548–565 (KRTVETEAVQMLKDIKKE) carry the Nuclear localization signal motif. Ser573 and Ser598 each carry phosphoserine.

The protein belongs to the phosphatase 2A regulatory subunit B56 family. As to quaternary structure, PP2A consists of a common heterodimeric core enzyme, composed of a 36 kDa catalytic subunit (subunit C) and a 65 kDa constant regulatory subunit (PR65 or subunit A), that associates with a variety of regulatory subunits. Proteins that associate with the core dimer include three families of regulatory subunits B (the R2/B/PR55/B55, R3/B''/PR72/PR130/PR59 and R5/B'/B56 families), the 48 kDa variable regulatory subunit, viral proteins, and cell signaling molecules. Interacts with the PP2A A subunit PPP2R1A. Interacts with SGO1. Interacts with ADCY8. In terms of tissue distribution, isoform Delta-2 is widely expressed. Isoform Delta-1 is highly expressed in brain.

It is found in the cytoplasm. It localises to the nucleus. Its function is as follows. The B regulatory subunit might modulate substrate selectivity and catalytic activity, and might also direct the localization of the catalytic enzyme to a particular subcellular compartment. The chain is Serine/threonine-protein phosphatase 2A 56 kDa regulatory subunit delta isoform (PPP2R5D) from Homo sapiens (Human).